The chain runs to 117 residues: Large ribosomal subunit protein uL18 (117 aa).

It belongs to the universal ribosomal protein uL18 family. As to quaternary structure, part of the 50S ribosomal subunit; part of the 5S rRNA/L5/L18/L25 subcomplex. Contacts the 5S and 23S rRNAs.

In terms of biological role, this is one of the proteins that bind and probably mediate the attachment of the 5S RNA into the large ribosomal subunit, where it forms part of the central protuberance. The protein is Large ribosomal subunit protein uL18 of Francisella tularensis subsp. tularensis (strain FSC 198).